We begin with the raw amino-acid sequence, 342 residues long: 4-amino-5-hydroxymethyl-2-methylpyrimidine phosphate synthase (342 aa).

K62 carries the post-translational modification N6-(pyridoxal phosphate)lysine. H66 is a catalytic residue. 115–118 (GEFG) is a binding site for pyridoxal 5'-phosphate. A CCCFC; essential for catalytic activity, may be the site of iron coordination motif is present at residues 195–199 (CCCFC).

It belongs to the NMT1/THI5 family. As to quaternary structure, homodimer. Fe cation is required as a cofactor.

The enzyme catalyses N(6)-(pyridoxal phosphate)-L-lysyl-[4-amino-5-hydroxymethyl-2-methylpyrimidine phosphate synthase] + L-histidyl-[4-amino-5-hydroxymethyl-2-methylpyrimidine phosphate synthase] + 2 Fe(3+) + 4 H2O = L-lysyl-[4-amino-5-hydroxymethyl-2-methylpyrimidine phosphate synthase] + (2S)-2-amino-5-hydroxy-4-oxopentanoyl-[4-amino-5-hydroxymethyl-2-methylpyrimidine phosphate synthase] + 4-amino-2-methyl-5-(phosphooxymethyl)pyrimidine + 3-oxopropanoate + 2 Fe(2+) + 2 H(+). The protein operates within cofactor biosynthesis; thiamine diphosphate biosynthesis. In terms of biological role, responsible for the formation of the pyrimidine heterocycle in the thiamine biosynthesis pathway. Catalyzes the formation of hydroxymethylpyrimidine phosphate (HMP-P) from histidine and pyridoxal phosphate (PLP). The protein uses PLP and the active site histidine to form HMP-P, generating an inactive enzyme. The enzyme can only undergo a single turnover, which suggests it is a suicide enzyme. The polypeptide is 4-amino-5-hydroxymethyl-2-methylpyrimidine phosphate synthase (Aspergillus parasiticus).